The primary structure comprises 491 residues: Anthranilate synthase component 1 (491 aa).

L-tryptophan is bound by residues Ser-49 and 271-273 (PYL). Chorismate is bound at residue 306–307 (GT). Glu-333 provides a ligand contact to Mg(2+). Chorismate-binding positions include Tyr-421, Arg-441, 455–457 (GAG), and Gly-457. Residue Glu-470 coordinates Mg(2+).

The protein belongs to the anthranilate synthase component I family. As to quaternary structure, heterotetramer consisting of two non-identical subunits: a beta subunit (TrpG) and a large alpha subunit (TrpE). Mg(2+) serves as cofactor.

The enzyme catalyses chorismate + L-glutamine = anthranilate + pyruvate + L-glutamate + H(+). It functions in the pathway amino-acid biosynthesis; L-tryptophan biosynthesis; L-tryptophan from chorismate: step 1/5. With respect to regulation, feedback inhibited by tryptophan. In terms of biological role, part of a heterotetrameric complex that catalyzes the two-step biosynthesis of anthranilate, an intermediate in the biosynthesis of L-tryptophan. In the first step, the glutamine-binding beta subunit (TrpG) of anthranilate synthase (AS) provides the glutamine amidotransferase activity which generates ammonia as a substrate that, along with chorismate, is used in the second step, catalyzed by the large alpha subunit of AS (TrpE) to produce anthranilate. In the absence of TrpG, TrpE can synthesize anthranilate directly from chorismate and high concentrations of ammonia. This Neisseria gonorrhoeae (strain ATCC 700825 / FA 1090) protein is Anthranilate synthase component 1 (trpE).